Here is a 216-residue protein sequence, read N- to C-terminus: Octanoyltransferase (216 aa).

The BPL/LPL catalytic domain occupies 35–213 (NSNPDFIWIG…TIEEEFNFDF (179 aa)). Substrate contacts are provided by residues 77-84 (RGGEVTCH), 144-146 (SIG), and 157-159 (GFS). Cys175 acts as the Acyl-thioester intermediate in catalysis.

This sequence belongs to the LipB family.

The protein localises to the cytoplasm. It catalyses the reaction octanoyl-[ACP] + L-lysyl-[protein] = N(6)-octanoyl-L-lysyl-[protein] + holo-[ACP] + H(+). It participates in protein modification; protein lipoylation via endogenous pathway; protein N(6)-(lipoyl)lysine from octanoyl-[acyl-carrier-protein]: step 1/2. Catalyzes the transfer of endogenously produced octanoic acid from octanoyl-acyl-carrier-protein onto the lipoyl domains of lipoate-dependent enzymes. Lipoyl-ACP can also act as a substrate although octanoyl-ACP is likely to be the physiological substrate. The chain is Octanoyltransferase from Prochlorococcus marinus (strain MIT 9301).